We begin with the raw amino-acid sequence, 549 residues long: MSGTAVARLLLRLELPSPGVMPPPPTDYDYGGPISDDEFLASAMATEGPTVRYDLFPQNNSQPTLQIVLNHTEVQTDLQYPHYEDLGLDPDPNWTRICEDVYNPLLENNRIEFWVCGVLINIVGVLGILGNIISMIILSRPQMRSSINYLLTGLARCDTVLIITSILLFGIPSIYPYTGHFFGYYNYVYPFISPAVFPIGMIAQTASIYMTFTVTLERYVAVCHPLKARALCTYGRAKIYFIVCVCFSLAYNMPRFWEVLTVTYPEPGKDVILHCVRPSRLRRSETYINIYIHWCYLIVNYIIPFLTLAILNCLIYRQVKRANRERQRLSRSEKREIGLATMLLCVVIVFFMLNFLPLVLNISEAFYSTIDHKITKISNLLITINSSVNFLIYIIFGEKFKRIFLLIFFKRRLSRDQPDLIHYESSISNNGDGTLNHRSSGRFSRHGTQRSTTTTYLVATGGPGGGGCGGGGGNNSLNNVRLTQVSGSPGLVKIKRNRAPSPGPVVYFPAREMQRSASTTNSTTNNNTSIGYDWTLPDSKKLGHVSSGF.

The Extracellular portion of the chain corresponds to methionine 1–glycine 117. Residues asparagine 59, asparagine 70, and asparagine 93 are each glycosylated (N-linked (GlcNAc...) asparagine). The chain crosses the membrane as a helical span at residues valine 118 to leucine 138. At serine 139 to aspartate 158 the chain is on the cytoplasmic side. The chain crosses the membrane as a helical span at residues threonine 159–glycine 179. Over histidine 180 to phenylalanine 181 the chain is Extracellular. Residues phenylalanine 182 to isoleucine 202 traverse the membrane as a helical segment. The Cytoplasmic portion of the chain corresponds to alanine 203–lysine 238. The helical transmembrane segment at isoleucine 239–valine 259 threads the bilayer. Over leucine 260 to asparagine 289 the chain is Extracellular. The chain crosses the membrane as a helical span at residues isoleucine 290–isoleucine 310. Over leucine 311–threonine 341 the chain is Cytoplasmic. The helical transmembrane segment at methionine 342–isoleucine 362 threads the bilayer. Residues serine 363–lysine 376 lie on the Extracellular side of the membrane. The helical transmembrane segment at isoleucine 377 to glycine 397 threads the bilayer. Residues glutamate 398–phenylalanine 549 are Cytoplasmic-facing.

This sequence belongs to the G-protein coupled receptor 1 family. Expressed in ovaries, heads and bodies. Expressed in dopaminergic neurons.

Its subcellular location is the cell membrane. Functionally, a receptor for the FMRFamide peptides. Reacts with high affinity to FMRFamide and intrinsic FMRFamide-related peptides. By stimulating intracellular calcium signaling through the inositol 1,4,5-trisphosphate receptor, Itpr, in dopaminergic neurons, may be involved in the maintenance of neuronal excitability and in the regulation of flight bout duration. This is FMRFamide receptor from Drosophila melanogaster (Fruit fly).